A 477-amino-acid polypeptide reads, in one-letter code: Glycogen synthase (477 aa).

ADP-alpha-D-glucose is bound at residue K15.

It belongs to the glycosyltransferase 1 family. Bacterial/plant glycogen synthase subfamily.

It carries out the reaction [(1-&gt;4)-alpha-D-glucosyl](n) + ADP-alpha-D-glucose = [(1-&gt;4)-alpha-D-glucosyl](n+1) + ADP + H(+). It functions in the pathway glycan biosynthesis; glycogen biosynthesis. Synthesizes alpha-1,4-glucan chains using ADP-glucose. In Klebsiella pneumoniae subsp. pneumoniae (strain ATCC 700721 / MGH 78578), this protein is Glycogen synthase.